A 603-amino-acid polypeptide reads, in one-letter code: Elongation factor 4 (603 aa).

The tr-type G domain maps to 7-189; sequence VRIRNFCIIA…AVVERIPPPP (183 aa). Residues 19 to 24 and 136 to 139 contribute to the GTP site; these read DHGKST and NKID.

Belongs to the TRAFAC class translation factor GTPase superfamily. Classic translation factor GTPase family. LepA subfamily.

It is found in the cell inner membrane. The enzyme catalyses GTP + H2O = GDP + phosphate + H(+). Required for accurate and efficient protein synthesis under certain stress conditions. May act as a fidelity factor of the translation reaction, by catalyzing a one-codon backward translocation of tRNAs on improperly translocated ribosomes. Back-translocation proceeds from a post-translocation (POST) complex to a pre-translocation (PRE) complex, thus giving elongation factor G a second chance to translocate the tRNAs correctly. Binds to ribosomes in a GTP-dependent manner. This is Elongation factor 4 from Trichormus variabilis (strain ATCC 29413 / PCC 7937) (Anabaena variabilis).